The following is a 555-amino-acid chain: CTP synthase (555 aa).

Positions 1–267 are amidoligase domain; that stretch reads MAKYIFVTGG…GNYLTLRLGL (267 aa). S13 serves as a coordination point for CTP. Position 13 (S13) interacts with UTP. Residue 14 to 19 participates in ATP binding; the sequence is SVGKGI. Y54 is a binding site for L-glutamine. D71 contributes to the ATP binding site. D71 and E141 together coordinate Mg(2+). Residues 148–150, 188–193, and K224 each bind CTP; these read DIE and KTKPTQ. UTP is bound by residues 188-193 and K224; that span reads KTKPTQ. The region spanning 292–535 is the Glutamine amidotransferase type-1 domain; the sequence is AIALVGKYVE…IAAAAQTFRE (244 aa). G354 provides a ligand contact to L-glutamine. The active-site Nucleophile; for glutamine hydrolysis is C381. L-glutamine contacts are provided by residues 382–385, E406, and R463; that span reads LGMQ. Catalysis depends on residues H508 and E510.

It belongs to the CTP synthase family. Homotetramer.

The enzyme catalyses UTP + L-glutamine + ATP + H2O = CTP + L-glutamate + ADP + phosphate + 2 H(+). It catalyses the reaction L-glutamine + H2O = L-glutamate + NH4(+). The catalysed reaction is UTP + NH4(+) + ATP = CTP + ADP + phosphate + 2 H(+). It functions in the pathway pyrimidine metabolism; CTP biosynthesis via de novo pathway; CTP from UDP: step 2/2. Allosterically activated by GTP, when glutamine is the substrate; GTP has no effect on the reaction when ammonia is the substrate. The allosteric effector GTP functions by stabilizing the protein conformation that binds the tetrahedral intermediate(s) formed during glutamine hydrolysis. Inhibited by the product CTP, via allosteric rather than competitive inhibition. Functionally, catalyzes the ATP-dependent amination of UTP to CTP with either L-glutamine or ammonia as the source of nitrogen. Regulates intracellular CTP levels through interactions with the four ribonucleotide triphosphates. This chain is CTP synthase, found in Roseiflexus castenholzii (strain DSM 13941 / HLO8).